The primary structure comprises 307 residues: tRNA dimethylallyltransferase (307 aa).

7–14 contacts ATP; the sequence is GPTAGGKT. 9–14 lines the substrate pocket; the sequence is TAGGKT. Residues 32–35 form an interaction with substrate tRNA region; the sequence is DSRQ.

This sequence belongs to the IPP transferase family. As to quaternary structure, monomer. Mg(2+) is required as a cofactor.

It carries out the reaction adenosine(37) in tRNA + dimethylallyl diphosphate = N(6)-dimethylallyladenosine(37) in tRNA + diphosphate. Functionally, catalyzes the transfer of a dimethylallyl group onto the adenine at position 37 in tRNAs that read codons beginning with uridine, leading to the formation of N6-(dimethylallyl)adenosine (i(6)A). The protein is tRNA dimethylallyltransferase of Elusimicrobium minutum (strain Pei191).